The sequence spans 335 residues: Histidinol-phosphatase (335 aa).

Belongs to the PHP hydrolase family. HisK subfamily.

It carries out the reaction L-histidinol phosphate + H2O = L-histidinol + phosphate. It functions in the pathway amino-acid biosynthesis; L-histidine biosynthesis; L-histidine from 5-phospho-alpha-D-ribose 1-diphosphate: step 8/9. The polypeptide is Histidinol-phosphatase (HIS2) (Saccharomyces cerevisiae (strain ATCC 204508 / S288c) (Baker's yeast)).